Consider the following 238-residue polypeptide: Ribosomal RNA small subunit methyltransferase G (238 aa).

Residues glycine 78, phenylalanine 83, 129–130 (AE), and arginine 148 each bind S-adenosyl-L-methionine. Positions 217–238 (KKKETPKKYPRKAGTPAKSPIK) are disordered.

The protein belongs to the methyltransferase superfamily. RNA methyltransferase RsmG family.

Its subcellular location is the cytoplasm. In terms of biological role, specifically methylates the N7 position of a guanine in 16S rRNA. This Lactococcus lactis subsp. cremoris (strain MG1363) protein is Ribosomal RNA small subunit methyltransferase G.